The chain runs to 612 residues: Oligopeptide transport ATP-binding protein OppD (612 aa).

The ABC transporter 1 domain maps to 5–255; sequence LEVTDLAVTF…RRMPYTVGLL (251 aa). The ATP site is built by serine 43, glycine 44, serine 45, glycine 46, lysine 47, serine 48, alanine 49, tyrosine 61, glutamine 96, arginine 147, glycine 158, glutamate 159, and histidine 213. Residues cysteine 286, cysteine 292, cysteine 299, and cysteine 317 each coordinate [4Fe-4S] cluster. Positions 350-600 constitute an ABC transporter 2 domain; sequence VRVRHLVKTY…PKHEYTRRLL (251 aa). The ATP site is built by serine 396, glycine 397, serine 398, glycine 399, lysine 400, serine 401, threonine 402, glutamine 445, arginine 495, glutamate 499, glycine 503, and histidine 558.

The protein belongs to the ABC transporter superfamily. As to quaternary structure, the complex is composed of an ATP-binding protein (OppD), two transmembrane proteins (OppB and OppC) and a solute-binding protein (OppA).

It localises to the cell inner membrane. The enzyme catalyses a [peptide](out) + ATP + H2O = a [peptide](in) + ADP + phosphate + H(+). Part of the ABC transporter complex OppABCD involved in the uptake of oligopeptides. Responsible for energy coupling to the transport system. The chain is Oligopeptide transport ATP-binding protein OppD from Mycobacterium bovis (strain ATCC BAA-935 / AF2122/97).